Consider the following 53-residue polypeptide: UPF0391 membrane protein Ent638_0536 (53 aa).

A run of 2 helical transmembrane segments spans residues 4-24 and 27-47; these read WGII…GGLA and AAWA…VSLF.

The protein belongs to the UPF0391 family.

It localises to the cell membrane. The chain is UPF0391 membrane protein Ent638_0536 from Enterobacter sp. (strain 638).